The chain runs to 397 residues: Oxysterol-binding protein homolog C354.07c (397 aa).

Residues Asn-186 and Asn-195 are each glycosylated (N-linked (GlcNAc...) asparagine).

It belongs to the OSBP family.

Its subcellular location is the endoplasmic reticulum. The sequence is that of Oxysterol-binding protein homolog C354.07c from Schizosaccharomyces pombe (strain 972 / ATCC 24843) (Fission yeast).